The primary structure comprises 423 residues: MNLDLNQLVKWHREFHRFPEIGWSEFWTTSRIADYLEDLDCFEIFLGKQIINPDFVRGRKQAVVDKGLANAKAYGANEKWLEKMEGYTGCVALFDSGKPGKTIALRFDIDCVNVTETRSPEHIPNKEGFASINDGFMHACGHDSHITIGLGVALWIAQNKDKLTGKVKIVFQPAEEGVRGAAAIAQSGIIDDADYFASSHISFCANTGTVIANPRNFLSTTKIDIRYKGKPAHAGAAPHLGRNALLAAAHTVTQLHGIARHGKGMTRINVGVLKAGEGRNVIPSSAELQLEVRGENKAINEYMTEQVMQIAKGISISFNVAYETEIVGEAVDMNNDVELIKLIEEISLEQPQINNVNSDYAFNASEDATILGRRVQEHGGKAIYFILGADRTAGHHEAEFDFDENQLLTGVNIYTSLVQKLLS.

It belongs to the peptidase M20 family. Mn(2+) serves as cofactor.

Catalyzes the cleavage of p-aminobenzoyl-glutamate (PABA-GLU) to form p-aminobenzoate (PABA) and glutamate. This is p-aminobenzoyl-glutamate hydrolase subunit A homolog (abgA) from Haemophilus influenzae (strain ATCC 51907 / DSM 11121 / KW20 / Rd).